The primary structure comprises 432 residues: Glutamyl-tRNA reductase (432 aa).

Residues 49–52 (TCNR), serine 101, 106–108 (EPQ), and glutamine 112 contribute to the substrate site. Cysteine 50 serves as the catalytic Nucleophile. 181–186 (GAGETI) is a binding site for NADP(+). The disordered stretch occupies residues 408-432 (PEKPGYRHPPVATPIVRTDDANPAP).

Belongs to the glutamyl-tRNA reductase family. In terms of assembly, homodimer.

It carries out the reaction (S)-4-amino-5-oxopentanoate + tRNA(Glu) + NADP(+) = L-glutamyl-tRNA(Glu) + NADPH + H(+). Its pathway is porphyrin-containing compound metabolism; protoporphyrin-IX biosynthesis; 5-aminolevulinate from L-glutamyl-tRNA(Glu): step 1/2. In terms of biological role, catalyzes the NADPH-dependent reduction of glutamyl-tRNA(Glu) to glutamate 1-semialdehyde (GSA). The polypeptide is Glutamyl-tRNA reductase (Xanthomonas campestris pv. campestris (strain B100)).